The sequence spans 377 residues: Nitric oxide reductase FlRd-NAD(+) reductase (377 aa).

It belongs to the FAD-dependent oxidoreductase family. It depends on FAD as a cofactor.

Its subcellular location is the cytoplasm. The catalysed reaction is 2 reduced [nitric oxide reductase rubredoxin domain] + NAD(+) + H(+) = 2 oxidized [nitric oxide reductase rubredoxin domain] + NADH. The protein operates within nitrogen metabolism; nitric oxide reduction. Functionally, one of at least two accessory proteins for anaerobic nitric oxide (NO) reductase. Reduces the rubredoxin moiety of NO reductase. This is Nitric oxide reductase FlRd-NAD(+) reductase from Klebsiella pneumoniae (strain 342).